A 109-amino-acid chain; its full sequence is UPF0449 protein C19orf25 homolog (109 aa).

Y63 carries the post-translational modification Phosphotyrosine.

Belongs to the UPF0449 family.

This is UPF0449 protein C19orf25 homolog from Rattus norvegicus (Rat).